The primary structure comprises 194 residues: Large ribosomal subunit protein eL15 (194 aa).

The segment at 158 to 194 (ANRGLTSAGKKGRGLMYKGKGAEKARPGVRANGKKTK) is disordered.

It belongs to the eukaryotic ribosomal protein eL15 family.

This Methanococcus maripaludis (strain DSM 14266 / JCM 13030 / NBRC 101832 / S2 / LL) protein is Large ribosomal subunit protein eL15.